Here is a 161-residue protein sequence, read N- to C-terminus: NADH-quinone oxidoreductase subunit C (161 aa).

The protein belongs to the complex I 30 kDa subunit family. As to quaternary structure, NDH-1 is composed of 14 different subunits. Subunits NuoB, C, D, E, F, and G constitute the peripheral sector of the complex.

The protein resides in the cell inner membrane. The enzyme catalyses a quinone + NADH + 5 H(+)(in) = a quinol + NAD(+) + 4 H(+)(out). Functionally, NDH-1 shuttles electrons from NADH, via FMN and iron-sulfur (Fe-S) centers, to quinones in the respiratory chain. The immediate electron acceptor for the enzyme in this species is believed to be ubiquinone. Couples the redox reaction to proton translocation (for every two electrons transferred, four hydrogen ions are translocated across the cytoplasmic membrane), and thus conserves the redox energy in a proton gradient. The polypeptide is NADH-quinone oxidoreductase subunit C (Citrifermentans bemidjiense (strain ATCC BAA-1014 / DSM 16622 / JCM 12645 / Bem) (Geobacter bemidjiensis)).